The sequence spans 96 residues: uncharacterized protein (96 aa).

A helical transmembrane segment spans residues 1–21; that stretch reads MSDFEIIVGISSLLQVIILNI.

Its subcellular location is the membrane. This is an uncharacterized protein from Saccharomyces cerevisiae (strain ATCC 204508 / S288c) (Baker's yeast).